We begin with the raw amino-acid sequence, 504 residues long: Maturase K (504 aa).

This sequence belongs to the intron maturase 2 family. MatK subfamily.

The protein resides in the plastid. The protein localises to the chloroplast. Functionally, usually encoded in the trnK tRNA gene intron. Probably assists in splicing its own and other chloroplast group II introns. This chain is Maturase K, found in Cucumis sativus (Cucumber).